Here is a 392-residue protein sequence, read N- to C-terminus: Phosphoglycerate kinase (392 aa).

Substrate is bound by residues 21 to 23 (DFN), Arg-36, 59 to 62 (HLGR), Arg-113, and Arg-146. Residues Lys-197, Glu-319, and 345–348 (GGDT) contribute to the ATP site.

Belongs to the phosphoglycerate kinase family. In terms of assembly, monomer.

It localises to the cytoplasm. The enzyme catalyses (2R)-3-phosphoglycerate + ATP = (2R)-3-phospho-glyceroyl phosphate + ADP. The protein operates within carbohydrate degradation; glycolysis; pyruvate from D-glyceraldehyde 3-phosphate: step 2/5. This Francisella tularensis subsp. tularensis (strain FSC 198) protein is Phosphoglycerate kinase.